The following is a 258-amino-acid chain: MQENLKNDKLKIGKYEFDSRFILGSGKYSLELIKSAIEEAKAQIITLALRRANTGEIANILDYIPKNITLLPNTSGARNADEALRIARLSRELGCGELIKIEVISDSRYLLPDNYETIKACELLAKEGFTPLPYMHADLYAARAMRDAGAAAIMPLAAPIGSNKGLCAKEFIQILLNEIDLPIIVDAGIGSPSQACEAMQMGVSAVMVNTAIAEAKDIALMARAFSLAVNAGRVAFLAGVASVSEAKASSPLTGFLRD.

Lys-100 (schiff-base intermediate with DXP) is an active-site residue. Residues Gly-161, 187–188 (AG), and 209–210 (NT) each bind 1-deoxy-D-xylulose 5-phosphate.

It belongs to the ThiG family. In terms of assembly, homotetramer. Forms heterodimers with either ThiH or ThiS.

It is found in the cytoplasm. It catalyses the reaction [ThiS sulfur-carrier protein]-C-terminal-Gly-aminoethanethioate + 2-iminoacetate + 1-deoxy-D-xylulose 5-phosphate = [ThiS sulfur-carrier protein]-C-terminal Gly-Gly + 2-[(2R,5Z)-2-carboxy-4-methylthiazol-5(2H)-ylidene]ethyl phosphate + 2 H2O + H(+). It participates in cofactor biosynthesis; thiamine diphosphate biosynthesis. Functionally, catalyzes the rearrangement of 1-deoxy-D-xylulose 5-phosphate (DXP) to produce the thiazole phosphate moiety of thiamine. Sulfur is provided by the thiocarboxylate moiety of the carrier protein ThiS. In vitro, sulfur can be provided by H(2)S. The protein is Thiazole synthase of Campylobacter jejuni subsp. jejuni serotype O:2 (strain ATCC 700819 / NCTC 11168).